The chain runs to 426 residues: Probable serine/threonine-protein kinase PBL3 (426 aa).

Residues 1 to 42 are disordered; the sequence is MGNCLDSSAKVDSSSHSPHANSASLSSRVSSKTSRSTVPSSL. A lipid anchor (N-myristoyl glycine) is attached at Gly2. Cys4 carries the S-palmitoyl cysteine lipid modification. Residues 7–42 are compositionally biased toward low complexity; sequence SSAKVDSSSHSPHANSASLSSRVSSKTSRSTVPSSL. A Phosphothreonine modification is found at Thr72. The Protein kinase domain maps to 83 to 366; the sequence is FRPDSLLGEG…SEVLAKLDQL (284 aa). ATP-binding positions include 89–97 and Lys121; that span reads LGEGGFGYV. Tyr166 bears the Phosphotyrosine mark. The active-site Proton acceptor is Asp216. The residue at position 250 (Ser250) is a Phosphoserine. Phosphothreonine occurs at positions 251 and 256. Residue Tyr264 is modified to Phosphotyrosine. Residues 367-394 show a composition bias toward polar residues; the sequence is ESTKPGTGVGNRQAQIDSPRGSNGSIVQ. Residues 367–426 are disordered; the sequence is ESTKPGTGVGNRQAQIDSPRGSNGSIVQKSPRRYSYDRPLLHITPGASPLPTHNHSPRVR.

The protein belongs to the protein kinase superfamily. Ser/Thr protein kinase family. Interacts with the Xanthomonas campestris effector XopAC/AvrAC. As to expression, strongly expressed in leaves, moderately in flowers, and barely in roots.

It is found in the cell membrane. The protein localises to the nucleus. It carries out the reaction L-seryl-[protein] + ATP = O-phospho-L-seryl-[protein] + ADP + H(+). The catalysed reaction is L-threonyl-[protein] + ATP = O-phospho-L-threonyl-[protein] + ADP + H(+). Functionally, may be involved in plant defense signaling. The sequence is that of Probable serine/threonine-protein kinase PBL3 from Arabidopsis thaliana (Mouse-ear cress).